Consider the following 330-residue polypeptide: Olfactory receptor 5P70 (330 aa).

The Extracellular segment spans residues 1–28; the sequence is MAFLEDGNHTIVTEFILLGLTDDPVLRD. Residue Asn-8 is glycosylated (N-linked (GlcNAc...) asparagine). The helical transmembrane segment at 29–49 threads the bilayer; sequence ILFTIILCIYLVTVSGNLSTI. At 50–57 the chain is on the cytoplasmic side; the sequence is LLIRVSSQ. Residues 58-78 form a helical membrane-spanning segment; the sequence is LHHPMYFFLSHLASVDIGISS. Over 79–102 the chain is Extracellular; it reads SVTPNMLANFLVKPNTISYIGCSI. Cys-100 and Cys-192 are disulfide-bonded. The chain crosses the membrane as a helical span at residues 103–123; sequence QFTSAVFLATVECFLLAAMAY. Residues 124 to 136 lie on the Cytoplasmic side of the membrane; sequence DRFVAICNPLLYS. The helical transmembrane segment at 137 to 157 threads the bilayer; the sequence is TKMSREACIQLVVGSYIQGLL. Residues 158–199 are Extracellular-facing; sequence NASFFTLSFFSLIFCGPNRINHFYCDLAPLVELSCSDVTLAV. A helical membrane pass occupies residues 200-220; the sequence is VITSISAGFITLTTVFVIAIS. Over 221 to 240 the chain is Cytoplasmic; that stretch reads YSCIFITIMKMHSTESRYKA. The chain crosses the membrane as a helical span at residues 241-261; sequence FSTCTSHLTAVTLFYGTTMFI. Over 262–274 the chain is Extracellular; that stretch reads YVMPKSSYSTDQN. The helical transmembrane segment at 275 to 295 threads the bilayer; sequence KVLSVFYMVVIPMLNPLIYSL. Over 296–330 the chain is Cytoplasmic; sequence RNNEIKGALKRYLGKKIFSYGNLFCKTHYNDTHQV.

This sequence belongs to the G-protein coupled receptor 1 family.

It localises to the cell membrane. Potential odorant receptor. The polypeptide is Olfactory receptor 5P70 (Mus musculus (Mouse)).